A 535-amino-acid polypeptide reads, in one-letter code: Aklavinone 12-hydroxylase RdmE (535 aa).

Residues Leu15, Gly16, Glu35, Gln119, and Leu143 each contribute to the FAD site. Tyr224 acts as the Proton acceptor in catalysis. Asp308 contacts FAD. An aklavinone-binding site is contributed by Gly317.

The protein belongs to the PheA/TfdB FAD monooxygenase family. Monomer. Requires FAD as cofactor.

The catalysed reaction is aklavinone + NADPH + O2 + H(+) = epsilon-rhodomycinone + NADP(+) + H2O. Its pathway is antibiotic biosynthesis; daunorubicin biosynthesis. It functions in the pathway antibiotic biosynthesis; carminomycin biosynthesis. It participates in antibiotic biosynthesis; rhodomycin biosynthesis. Its activity is regulated as follows. Inhibited by phenylglyoxal and 2,3-butanedione. NADP provides a partial protection against inhibition by phenylglyoxal. Increasing the methanol concentration in the assay causes inhibition of the enzyme. Its function is as follows. Involved in the biosynthesis of the anthracyclines carminomycin, rhodomycin and daunorubicin (daunomycin) which are aromatic polyketide antibiotics that exhibit high cytotoxicity and are widely applied in the chemotherapy of a variety of cancers. Catalyzes the incorporation of a hydroxyl group at position C-11 of aklavinone, resulting in epsilon-rhodomycinone. It cannot accept substrates glycosylated at position C-7 and is specific for the C-9R configuration of anthracyclines. It can use both NAD or NADP but it is slowly inactivated in the presence of NADH. This Streptomyces purpurascens protein is Aklavinone 12-hydroxylase RdmE (rdmE).